The sequence spans 716 residues: Zinc finger protein on ecdysone puffs (716 aa).

Disordered regions lie at residues 103-168 and 182-208; these read PSLL…GGIR and KNAN…ESPY. The segment covering 188–203 has biased composition (basic and acidic residues); sequence KKKEPTPGEKKIESPT. S201 is modified (phosphoserine). Residue T203 is modified to Phosphothreonine. S206 bears the Phosphoserine mark. The C2H2-type 1 zinc-finger motif lies at 216 to 240; sequence FYCHLCKKHMWDANSFENHIKGRTH. The C2H2-type 2; atypical zinc-finger motif lies at 288–310; sequence DYCTMCDLNFHGHISTHRKSEGH. The C2H2-type 3 zinc-finger motif lies at 319–343; it reads PKCIECNKEFATRIDYDTHLLSAEH. Residues 350–359 are compositionally biased toward basic and acidic residues; that stretch reads NNTKVGERKR. The interval 350–447 is disordered; sequence NNTKVGERKR…EEEEVALPVD (98 aa). Residues 379 to 383 carry the Nuclear localization signal motif; sequence KRKKK. A compositionally biased stretch (basic and acidic residues) spans 386–401; the sequence is KKEGEAADGEAKKEGA. The segment covering 405-414 has biased composition (acidic residues); it reads EGAEGDEAEG. Basic and acidic residues predominate over residues 415–431; that stretch reads EEAKEGEEAADETKEGD. A compositionally biased stretch (acidic residues) spans 432-447; sequence ELNESQEEEEVALPVD. Residues 489-513 form a C2H2-type 4 zinc finger; the sequence is YECSVCSKFFDTEVTAEIHSRTATH. The interval 534 to 716 is disordered; it reads RAAAALEENE…QRARGRYNRY (183 aa). Over residues 541-551 the composition is skewed to basic and acidic residues; that stretch reads ENERKKRKVEE. A Nuclear localization signal motif is present at residues 544-548; sequence RKKRK. A compositionally biased stretch (acidic residues) spans 560 to 638; the sequence is AAEETTEGAE…GQEGEQEPEP (79 aa). The segment covering 639 to 656 has biased composition (pro residues); sequence EPAPVQTPAPAEPAPPAK. The span at 657 to 704 shows a compositional bias: low complexity; that stretch reads TPAKTPTKAAAPAAVASPAAAATSADASPSPAKKATPARAAAGAKATP. Phosphoserine occurs at positions 673, 684, and 686. T692 bears the Phosphothreonine mark. Residues 707 to 716 show a composition bias toward basic residues; that stretch reads QRARGRYNRY.

It localises to the nucleus. It is found in the chromosome. Functionally, may play a role in the process of early and late gene activation, or possibly in RNA processing, for a defined set of developmentally regulated loci. The chain is Zinc finger protein on ecdysone puffs (Pep) from Drosophila melanogaster (Fruit fly).